Consider the following 550-residue polypeptide: Chaperonin GroEL (550 aa).

Residues 30–33, Lys-51, 87–91, Gly-415, and Asp-495 each bind ATP; these read TLGP and DGTTT.

Belongs to the chaperonin (HSP60) family. In terms of assembly, forms a cylinder of 14 subunits composed of two heptameric rings stacked back-to-back. Interacts with the co-chaperonin GroES.

Its subcellular location is the cytoplasm. It carries out the reaction ATP + H2O + a folded polypeptide = ADP + phosphate + an unfolded polypeptide.. Together with its co-chaperonin GroES, plays an essential role in assisting protein folding. The GroEL-GroES system forms a nano-cage that allows encapsulation of the non-native substrate proteins and provides a physical environment optimized to promote and accelerate protein folding. This is Chaperonin GroEL from Shewanella woodyi (strain ATCC 51908 / MS32).